The chain runs to 236 residues: Demethylmenaquinone methyltransferase (236 aa).

Residues Thr-58, Asp-79, and Asn-106 to Ala-107 contribute to the S-adenosyl-L-methionine site.

The protein belongs to the class I-like SAM-binding methyltransferase superfamily. MenG/UbiE family.

It carries out the reaction a 2-demethylmenaquinol + S-adenosyl-L-methionine = a menaquinol + S-adenosyl-L-homocysteine + H(+). Its pathway is quinol/quinone metabolism; menaquinone biosynthesis; menaquinol from 1,4-dihydroxy-2-naphthoate: step 2/2. Functionally, methyltransferase required for the conversion of demethylmenaquinol (DMKH2) to menaquinol (MKH2). This chain is Demethylmenaquinone methyltransferase, found in Listeria welshimeri serovar 6b (strain ATCC 35897 / DSM 20650 / CCUG 15529 / CIP 8149 / NCTC 11857 / SLCC 5334 / V8).